We begin with the raw amino-acid sequence, 152 residues long: MARHFGMALAPWDVMGGGRFQSKKAMEERRKNGEGIRSFVGASEQTDAEIKISEALAKVAEEHGTESVTAIAIAYVRSKAKNVFPLVGGRKIEHLKQNIEALSIKLTPEQIKYLESIIPFDVGFPTNFIGDDPAVTKKASLLTAMSAQISFD.

The protein belongs to the aldo/keto reductase family. Aldo/keto reductase 2 subfamily.

Putative aryl-alcohol dehydrogenase. In Saccharomyces cerevisiae (strain ATCC 204508 / S288c) (Baker's yeast), this protein is Putative aryl-alcohol dehydrogenase YFL057C.